The sequence spans 318 residues: 2-keto-3-deoxygluconate permease (318 aa).

10 helical membrane-spanning segments follow: residues 10–30 (IPGGLMLVPLFLGAFCNTFTP), 42–62 (GLITGTIPILAVWFFCMGASI), 76–96 (VLVVTKLATAWVVAMIAGAFL), 105–125 (LLAGISVLALVAAMDMTNGGL), 139–159 (AGAFVLMSLESGPLMTMVILG), 162–182 (GIATFEPQLFVGAVLPFLIGF), 199–219 (VQTLIPFFAFALGNTINLSVI), 224–244 (FAGIFLGVLVIIVTGIPLILA), 254–274 (TAGIAASSSAGAAVATPLLIA), and 289–309 (ALVATSVIVTSVLVPIITALW).

This sequence belongs to the KdgT transporter family.

The protein localises to the cell inner membrane. It catalyses the reaction 2-dehydro-3-deoxy-D-gluconate(in) + H(+)(in) = 2-dehydro-3-deoxy-D-gluconate(out) + H(+)(out). In terms of biological role, catalyzes the proton-dependent uptake of 2-keto-3-deoxygluconate (KDG) into the cell. The protein is 2-keto-3-deoxygluconate permease of Pectobacterium atrosepticum (strain SCRI 1043 / ATCC BAA-672) (Erwinia carotovora subsp. atroseptica).